A 997-amino-acid polypeptide reads, in one-letter code: P3N-PIPO polyprotein (997 aa).

Residues 173–313 (IVCVDDVNNL…VLFYSDVEHY (141 aa)) enclose the Peptidase S30 domain. Catalysis depends on for P1 proteinase activity residues E235 and S267. Residues 365-368 (KLSC) carry the Involved in interaction with stylet and aphid transmission motif. Positions 621–623 (PTK) match the Involved in virions binding and aphid transmission motif. The Peptidase C6 domain occupies 647-769 (MYIAKEGYCY…QSEMKHYRVG (123 aa)). Catalysis depends on for helper component proteinase activity residues C655 and H728.

The protein belongs to the potyviridae P3N-PIPO polyprotein family. Interacts (via PIPO domain) with host PCaP1 protein; this interaction may help to anchor the movement complex to the plasma membrane from which the complex could move to the plasmodesmata. Post-translationally, potyviral RNA is expressed as two polyproteins which undergo post-translational proteolytic processing. Genome polyprotein is processed by NIa-pro, P1 and HC-pro proteinases resulting in the production of at least ten individual proteins. P3N-PIPO is cleaved by P1 and HC-pro proteinases resulting in the production of three individual proteins. The P1 proteinase and the HC-pro cleave only their respective C-termini autocatalytically.

The protein resides in the host cell junction. Its subcellular location is the host plasmodesma. It carries out the reaction Hydrolyzes a Gly-|-Gly bond at its own C-terminus, commonly in the sequence -Tyr-Xaa-Val-Gly-|-Gly, in the processing of the potyviral polyprotein.. Required for aphid transmission and also has proteolytic activity. Only cleaves a Gly-Gly dipeptide at its own C-terminus. Interacts with virions and aphid stylets. Acts as a suppressor of RNA-mediated gene silencing, also known as post-transcriptional gene silencing (PTGS), a mechanism of plant viral defense that limits the accumulation of viral RNAs. May have RNA-binding activity. In terms of biological role, allows efficient cell to cell propagation, by bypassing the host cell wall barrier. Transports viral genome to neighboring plant cells directly through plasmosdesmata, without any budding. This is P3N-PIPO polyprotein from Citrullus lanatus (Watermelon).